Reading from the N-terminus, the 297-residue chain is N-acetylmuramic acid 6-phosphate etherase (297 aa).

Residues 55–218 (AAAALKSGGR…STGAMVKFGK (164 aa)) form the SIS domain. Glu-83 functions as the Proton donor in the catalytic mechanism. The active site involves Glu-114.

This sequence belongs to the GCKR-like family. MurNAc-6-P etherase subfamily. As to quaternary structure, homodimer.

It catalyses the reaction N-acetyl-D-muramate 6-phosphate + H2O = N-acetyl-D-glucosamine 6-phosphate + (R)-lactate. The protein operates within amino-sugar metabolism; 1,6-anhydro-N-acetylmuramate degradation. It functions in the pathway amino-sugar metabolism; N-acetylmuramate degradation. Its pathway is cell wall biogenesis; peptidoglycan recycling. Specifically catalyzes the cleavage of the D-lactyl ether substituent of MurNAc 6-phosphate, producing GlcNAc 6-phosphate and D-lactate. Together with AnmK, is also required for the utilization of anhydro-N-acetylmuramic acid (anhMurNAc) either imported from the medium or derived from its own cell wall murein, and thus plays a role in cell wall recycling. The chain is N-acetylmuramic acid 6-phosphate etherase from Salmonella paratyphi B (strain ATCC BAA-1250 / SPB7).